A 297-amino-acid chain; its full sequence is Ribosomal RNA small subunit methyltransferase A (297 aa).

Asn31, Leu33, Gly58, Glu79, Asp104, and Asn129 together coordinate S-adenosyl-L-methionine.

The protein belongs to the class I-like SAM-binding methyltransferase superfamily. rRNA adenine N(6)-methyltransferase family. RsmA subfamily.

It localises to the cytoplasm. It carries out the reaction adenosine(1518)/adenosine(1519) in 16S rRNA + 4 S-adenosyl-L-methionine = N(6)-dimethyladenosine(1518)/N(6)-dimethyladenosine(1519) in 16S rRNA + 4 S-adenosyl-L-homocysteine + 4 H(+). Its function is as follows. Specifically dimethylates two adjacent adenosines (A1518 and A1519) in the loop of a conserved hairpin near the 3'-end of 16S rRNA in the 30S particle. May play a critical role in biogenesis of 30S subunits. This chain is Ribosomal RNA small subunit methyltransferase A, found in Staphylococcus aureus (strain MRSA252).